The sequence spans 215 residues: Nucleoside triphosphate pyrophosphatase (215 aa).

Asp77 (proton acceptor) is an active-site residue.

This sequence belongs to the Maf family. A divalent metal cation is required as a cofactor.

Its subcellular location is the cytoplasm. It catalyses the reaction a ribonucleoside 5'-triphosphate + H2O = a ribonucleoside 5'-phosphate + diphosphate + H(+). It carries out the reaction a 2'-deoxyribonucleoside 5'-triphosphate + H2O = a 2'-deoxyribonucleoside 5'-phosphate + diphosphate + H(+). Functionally, nucleoside triphosphate pyrophosphatase. May have a dual role in cell division arrest and in preventing the incorporation of modified nucleotides into cellular nucleic acids. In Rickettsia africae (strain ESF-5), this protein is Nucleoside triphosphate pyrophosphatase.